Here is a 401-residue protein sequence, read N- to C-terminus: Transcriptional regulator Myc-2 (401 aa).

The O-linked (GlcNAc) threonine glycan is linked to T58. Positions 76 to 84 match the 9aaTAD motif; it reads EMVSEFLGD. Disordered regions lie at residues 177–251 and 286–325; these read SSKS…SRYP and LESSSSNNSSSNRQGKQRKCTSPRTSDSEDNDKRRTHNVL. The segment covering 205–230 has biased composition (acidic residues); it reads DSEDEEEEEEEEEEEEEEEEEEEEID. Residues 233–247 are compositionally biased toward basic and acidic residues; the sequence is TVEKRQKRNEAEVSD. The span at 288 to 297 shows a compositional bias: low complexity; sequence SSSSNNSSSN. The bHLH domain maps to 317–369; it reads DKRRTHNVLERQRRNELKLSFFALRDEIPEVANNEKAAKVVILKKATECIHSM. The tract at residues 376–397 is leucine-zipper; the sequence is LLSIKEQLRRKSEQLKHRLQQL.

Efficient DNA binding requires dimerization with another bHLH protein. Binds DNA as a heterodimer with MAX.

It is found in the nucleus. Functionally, transcription factor that binds DNA in a non-specific manner, yet also specifically recognizes the core sequence 5'-CAC[GA]TG-3'. Activates the transcription of growth-related genes. This chain is Transcriptional regulator Myc-2 (mycb), found in Cyprinus carpio (Common carp).